A 244-amino-acid polypeptide reads, in one-letter code: Protein HRI1 (244 aa).

Serine 143 bears the Phosphoserine mark.

Belongs to the HRI1 family. In terms of assembly, interacts with HRR25. May interact with SEC72.

It is found in the cytoplasm. It localises to the nucleus. In terms of biological role, unknown. Non essential. The protein is Protein HRI1 (HRI1) of Saccharomyces cerevisiae (strain ATCC 204508 / S288c) (Baker's yeast).